The chain runs to 1198 residues: Structural polyprotein (1198 aa).

Residues Thr-2–Asn-15 form an interaction with host EXOC1 region. Positions Leu-37–Val-72 are hydrophobic; homodimerization of capsid protein C. Residues Gly-106–Ala-127 constitute a propeptide, ER anchor for the capsid protein C, removed in mature form by serine protease NS3. The chain crosses the membrane as a helical span at residues Gly-110–Leu-130. Residue Asn-142 is glycosylated (N-linked (GlcNAc...) asparagine; by host). 2 consecutive transmembrane segments (helical) span residues Trp-254–Ser-274 and Val-280–Ser-294. Disulfide bonds link Cys-297–Cys-324, Cys-354–Cys-410, Cys-354–Cys-415, Cys-368–Cys-399, Cys-386–Cys-410, and Cys-386–Cys-415. Residues Asp-392–Gly-405 are fusion peptide. Asn-448 is a glycosylation site (N-linked (GlcNAc...) asparagine; by host). Disulfide bonds link Cys-484–Cys-581 and Cys-598–Cys-629. Transmembrane regions (helical) follow at residues Phe-747 to Val-767 and Ile-774 to Ala-794. 6 disulfide bridges follow: Cys-798-Cys-809, Cys-849-Cys-937, Cys-973-Cys-1017, Cys-1074-Cys-1123, Cys-1085-Cys-1106, and Cys-1107-Cys-1110. N-linked (GlcNAc...) asparagine; by host glycans are attached at residues Asn-924 and Asn-1001. The disordered stretch occupies residues Met-1151–Gln-1177.

In terms of assembly, homodimer. Interacts (via N-terminus) with host EXOC1 (via C-terminus); this interaction results in EXOC1 degradation through the proteasome degradation pathway. Interacts with host CAPRIN1; this interaction is involved in the suppression of the integrated stress response. As to quaternary structure, forms heterodimers with envelope protein E in the endoplasmic reticulum and Golgi. Homodimer; in the endoplasmic reticulum and Golgi. Interacts with protein prM. Interacts with non-structural protein 1. Post-translationally, genome polyprotein: Specific enzymatic cleavages in vivo yield mature proteins. Cleavages in the lumen of endoplasmic reticulum are performed by host signal peptidase, whereas cleavages in the cytoplasmic side are performed by serine protease NS3. Signal cleavage at the 2K-4B site requires a prior NS3 protease-mediated cleavage at the 4A-2K site. Cleaved in post-Golgi vesicles by a host furin, releasing the mature small envelope protein M, and peptide pr. This cleavage is incomplete as up to 30% of viral particles still carry uncleaved prM. In terms of processing, N-glycosylated.

Its subcellular location is the secreted. The protein localises to the virion membrane. It is found in the host endoplasmic reticulum membrane. Its function is as follows. Plays a role in virus budding by binding to the cell membrane and gathering the viral RNA into a nucleocapsid that forms the core of a mature virus particle. During virus entry, may induce genome penetration into the host cytoplasm after hemifusion induced by the surface proteins. Can migrate to the cell nucleus where it modulates host functions. Overcomes the anti-viral effects of host EXOC1 by sequestering and degrading the latter through the proteasome degradation pathway. Inhibits the integrated stress response (ISR) in the infected cell by binding to host CAPRIN1. In terms of biological role, inhibits RNA silencing by interfering with host Dicer. Prevents premature fusion activity of envelope proteins in trans-Golgi by binding to envelope protein E at pH6.0. After virion release in extracellular space, gets dissociated from E dimers. Functionally, acts as a chaperone for envelope protein E during intracellular virion assembly by masking and inactivating envelope protein E fusion peptide. prM is the only viral peptide matured by host furin in the trans-Golgi network probably to avoid catastrophic activation of the viral fusion activity in acidic Golgi compartment prior to virion release. prM-E cleavage is inefficient, and many virions are only partially matured. These uncleaved prM would play a role in immune evasion. Its function is as follows. May play a role in virus budding. Exerts cytotoxic effects by activating a mitochondrial apoptotic pathway through M ectodomain. May display a viroporin activity. In terms of biological role, binds to host cell surface receptor and mediates fusion between viral and cellular membranes. Envelope protein is synthesized in the endoplasmic reticulum in the form of heterodimer with protein prM. They play a role in virion budding in the ER, and the newly formed immature particle is covered with 60 spikes composed of heterodimer between precursor prM and envelope protein E. The virion is transported to the Golgi apparatus where the low pH causes dissociation of PrM-E heterodimers and formation of E homodimers. prM-E cleavage is inefficient, and many virions are only partially matured. These uncleaved prM would play a role in immune evasion. May play a role in neuroinvasiveness. This chain is Structural polyprotein, found in Ardeidae (herons).